Here is a 602-residue protein sequence, read N- to C-terminus: MSTPLDHIRNFSIVAHIDHGKSTLADRLIQLTGGLDTREMKDQVLDSMDIERERGITIKAQTVRLSYKAKNGEDYVLNLIDTPGHVDFAYEVSRSLAACEGSLLVVDASQGVEAQTLANVYQAIDNNHEIVVVLNKIDLPAAEPERVKQQIEEVIGIDASDAVEISAKTGLGIEDVLEAIVNKLPAPKEGDRNAPLKAMLVDSWYDSYLGVIVLVRVIDGVLKKGQTIRMMGTGAKYPVERTGVFTPKMVQVDDLGPGELGFITASIKEVADTRVGDTITEDRRPTENMLSGFKPAQPVVFCGLFPVDAADFEDLRGAMGKLRLNDASFSFEMETSAALGFGFRCGFLGLLHLEIIQERLEREFNLDLITTAPSVVYRLNMTDGTHKELHNPADMPDVVKIASIEEPWIKATIMTPDDYLGAIMKLCQERRGIQIDLTYVGPRAMITYDLPLNEVVFDFYDRLKSISKGYASFDYNLSDYREGDLVKMSILVNEEPVDALSMLVHRSAAEKRGRALCEKLKELIPQHMFKIPIQAAIGGRIVARETISALRKDVTAKCYGGDVTRKRKLLEKQKESKKRMRQFGKVEIPQEAFIQALKMGDD.

The 183-residue stretch at 6-188 (DHIRNFSIVA…AIVNKLPAPK (183 aa)) folds into the tr-type G domain. GTP contacts are provided by residues 18–23 (DHGKST) and 135–138 (NKID).

Belongs to the TRAFAC class translation factor GTPase superfamily. Classic translation factor GTPase family. LepA subfamily.

The protein localises to the cell inner membrane. The enzyme catalyses GTP + H2O = GDP + phosphate + H(+). Required for accurate and efficient protein synthesis under certain stress conditions. May act as a fidelity factor of the translation reaction, by catalyzing a one-codon backward translocation of tRNAs on improperly translocated ribosomes. Back-translocation proceeds from a post-translocation (POST) complex to a pre-translocation (PRE) complex, thus giving elongation factor G a second chance to translocate the tRNAs correctly. Binds to ribosomes in a GTP-dependent manner. This Brucella melitensis biotype 2 (strain ATCC 23457) protein is Elongation factor 4.